Consider the following 130-residue polypeptide: uncharacterized protein (130 aa).

An N-terminal signal peptide occupies residues Met1–Ser19.

The protein resides in the secreted. This is an uncharacterized protein from Homo sapiens (Human).